Consider the following 275-residue polypeptide: Pantothenate synthetase (275 aa).

Residue Met26–His33 coordinates ATP. Residue His33 is the Proton donor of the active site. A (R)-pantoate-binding site is contributed by Gln57. Gln57 lines the beta-alanine pocket. Position 144–147 (Gly144–Asp147) interacts with ATP. Gln150 provides a ligand contact to (R)-pantoate. ATP is bound by residues Val173 and Leu181–Arg184.

The protein belongs to the pantothenate synthetase family. As to quaternary structure, homodimer.

It localises to the cytoplasm. The enzyme catalyses (R)-pantoate + beta-alanine + ATP = (R)-pantothenate + AMP + diphosphate + H(+). It participates in cofactor biosynthesis; (R)-pantothenate biosynthesis; (R)-pantothenate from (R)-pantoate and beta-alanine: step 1/1. Functionally, catalyzes the condensation of pantoate with beta-alanine in an ATP-dependent reaction via a pantoyl-adenylate intermediate. This chain is Pantothenate synthetase, found in Azoarcus sp. (strain BH72).